Here is a 212-residue protein sequence, read N- to C-terminus: Thymidylate kinase (212 aa).

10–17 (GLEGAGKT) contacts ATP.

Belongs to the thymidylate kinase family.

It catalyses the reaction dTMP + ATP = dTDP + ADP. Functionally, phosphorylation of dTMP to form dTDP in both de novo and salvage pathways of dTTP synthesis. The sequence is that of Thymidylate kinase from Photorhabdus laumondii subsp. laumondii (strain DSM 15139 / CIP 105565 / TT01) (Photorhabdus luminescens subsp. laumondii).